The following is a 231-amino-acid chain: MAHPSQLGLQDAASPVMEELLHFHDHALMIVFLISTLVFYIILAMMTTKMTDKYILDAQEIEIVWTLLPAIVLILVALPSLRILYLIDEVENPHLTIKAMGHQWYWSYEYTDYEELSFDSYMTPLQDLNPGQFRLLETDHRMVIPMESLIRVLISAEDVLHSWAVPALGVKMDAVPGRLNQITFMISRPGLYYGQCSEICGANHSFMPIVLEAIPLDPFEDWSSSMLEEAX.

Residues 1–14 lie on the Mitochondrial intermembrane side of the membrane; sequence MAHPSQLGLQDAAS. A helical transmembrane segment spans residues 15-45; the sequence is PVMEELLHFHDHALMIVFLISTLVFYIILAM. Residues 46–59 lie on the Mitochondrial matrix side of the membrane; sequence MTTKMTDKYILDAQ. A helical membrane pass occupies residues 60-87; the sequence is EIEIVWTLLPAIVLILVALPSLRILYLI. Residues 88 to 231 are Mitochondrial intermembrane-facing; the sequence is DEVENPHLTI…WSSSMLEEAX (144 aa). Cu cation-binding residues include H161, C196, E198, C200, H204, and M207. E198 is a Mg(2+) binding site.

Belongs to the cytochrome c oxidase subunit 2 family. In terms of assembly, component of the cytochrome c oxidase (complex IV, CIV), a multisubunit enzyme composed of 14 subunits. The complex is composed of a catalytic core of 3 subunits MT-CO1, MT-CO2 and MT-CO3, encoded in the mitochondrial DNA, and 11 supernumerary subunits COX4I, COX5A, COX5B, COX6A, COX6B, COX6C, COX7A, COX7B, COX7C, COX8 and NDUFA4, which are encoded in the nuclear genome. The complex exists as a monomer or a dimer and forms supercomplexes (SCs) in the inner mitochondrial membrane with NADH-ubiquinone oxidoreductase (complex I, CI) and ubiquinol-cytochrome c oxidoreductase (cytochrome b-c1 complex, complex III, CIII), resulting in different assemblies (supercomplex SCI(1)III(2)IV(1) and megacomplex MCI(2)III(2)IV(2)). Found in a complex with TMEM177, COA6, COX18, COX20, SCO1 and SCO2. Interacts with TMEM177 in a COX20-dependent manner. Interacts with COX20. Interacts with COX16. Cu cation serves as cofactor.

The protein localises to the mitochondrion inner membrane. The catalysed reaction is 4 Fe(II)-[cytochrome c] + O2 + 8 H(+)(in) = 4 Fe(III)-[cytochrome c] + 2 H2O + 4 H(+)(out). Component of the cytochrome c oxidase, the last enzyme in the mitochondrial electron transport chain which drives oxidative phosphorylation. The respiratory chain contains 3 multisubunit complexes succinate dehydrogenase (complex II, CII), ubiquinol-cytochrome c oxidoreductase (cytochrome b-c1 complex, complex III, CIII) and cytochrome c oxidase (complex IV, CIV), that cooperate to transfer electrons derived from NADH and succinate to molecular oxygen, creating an electrochemical gradient over the inner membrane that drives transmembrane transport and the ATP synthase. Cytochrome c oxidase is the component of the respiratory chain that catalyzes the reduction of oxygen to water. Electrons originating from reduced cytochrome c in the intermembrane space (IMS) are transferred via the dinuclear copper A center (CU(A)) of subunit 2 and heme A of subunit 1 to the active site in subunit 1, a binuclear center (BNC) formed by heme A3 and copper B (CU(B)). The BNC reduces molecular oxygen to 2 water molecules using 4 electrons from cytochrome c in the IMS and 4 protons from the mitochondrial matrix. This is Cytochrome c oxidase subunit 2 (MT-CO2) from Latimeria chalumnae (Coelacanth).